Here is a 210-residue protein sequence, read N- to C-terminus: T-cell surface glycoprotein CD8 beta chain (210 aa).

The first 21 residues, 1 to 21 (MRPRLWLLLAAQLTVLHGNSV), serve as a signal peptide directing secretion. Residues 22-132 (LQQTPAYIKV…ELTFGKGTQL (111 aa)) enclose the Ig-like V-type domain. Over 22-170 (LQQTPAYIKV…ETQKGPLCSP (149 aa)) the chain is Extracellular. Cys-41 and Cys-116 are disulfide-bonded. An N-linked (GlcNAc...) asparagine glycan is attached at Asn-102. Residues 171–191 (ITLGLLVAGVLVLLVSLGVAI) form a helical membrane-spanning segment. At 192-210 (HLCCRRRRARLRFMKQFYK) the chain is on the cytoplasmic side. Residue Tyr-209 is modified to Phosphotyrosine.

In terms of assembly, forms disulfide-linked heterodimers with CD8A at the cell surface. Interacts with CD3D; this interaction couples TCR-CD3 with CD8. Interacts with LCK. Phosphorylated as a consequence of T-cell activation. Post-translationally, palmitoylated at the cytoplasmic tail and thereby targets the heterodimer CD8A/CD8B to lipid rafts unlike CD8A homodimers. As to expression, isoform 1, isoform 3, isoform 5, isoform 6, isoform 7 and isoform 8 are expressed in both thymus and peripheral CD8+ T-cells. Expression of isoform 1 is higher in thymus CD8+ T-cells than in peripheral CD8+ T-cells. Expression of isoform 6 is higher in peripheral CD8+ T-cells than in thymus CD8+ T-cells.

The protein resides in the cell membrane. It is found in the secreted. In terms of biological role, integral membrane glycoprotein that plays an essential role in the immune response and serves multiple functions in responses against both external and internal offenses. In T-cells, functions primarily as a coreceptor for MHC class I molecule:peptide complex. The antigens presented by class I peptides are derived from cytosolic proteins while class II derived from extracellular proteins. Interacts simultaneously with the T-cell receptor (TCR) and the MHC class I proteins presented by antigen presenting cells (APCs). In turn, recruits the Src kinase LCK to the vicinity of the TCR-CD3 complex. A palmitoylation site in the cytoplasmic tail of CD8B chain contributes to partitioning of CD8 into the plasma membrane lipid rafts where signaling proteins are enriched. Once LCK recruited, it initiates different intracellular signaling pathways by phosphorylating various substrates ultimately leading to lymphokine production, motility, adhesion and activation of cytotoxic T-lymphocytes (CTLs). Additionally, plays a critical role in thymic selection of CD8+ T-cells. This Homo sapiens (Human) protein is T-cell surface glycoprotein CD8 beta chain (CD8B).